Here is a 316-residue protein sequence, read N- to C-terminus: Pantothenate kinase (316 aa).

95–102 (GSVAVGKS) is an ATP binding site.

The protein belongs to the prokaryotic pantothenate kinase family.

The protein resides in the cytoplasm. The catalysed reaction is (R)-pantothenate + ATP = (R)-4'-phosphopantothenate + ADP + H(+). It functions in the pathway cofactor biosynthesis; coenzyme A biosynthesis; CoA from (R)-pantothenate: step 1/5. The polypeptide is Pantothenate kinase (Salmonella agona (strain SL483)).